We begin with the raw amino-acid sequence, 536 residues long: Probable pectinesterase/pectinesterase inhibitor 59 (536 aa).

An N-terminal signal peptide occupies residues 1-30 (MNMMMQKLSILFLHLILLVLLCVHPLTTVA). The segment at 31-183 (DRNSTDWCDK…SHLISNCLAV (153 aa)) is pectinesterase inhibitor 59. N-linked (GlcNAc...) asparagine glycans are attached at residues asparagine 33, asparagine 91, asparagine 116, asparagine 159, and asparagine 195. The tract at residues 221–522 (NLVVAKDGSG…FTVGKFIAGT (302 aa)) is pectinesterase 59. The substrate site is built by threonine 298 and glutamine 328. Residue aspartate 351 is the Proton donor; for pectinesterase activity of the active site. Cysteine 365 and cysteine 385 form a disulfide bridge. Aspartate 372 acts as the Nucleophile; for pectinesterase activity in catalysis. Substrate-binding residues include arginine 440 and tryptophan 442.

This sequence in the N-terminal section; belongs to the PMEI family. It in the C-terminal section; belongs to the pectinesterase family. In terms of tissue distribution, expressed in siliques.

The protein resides in the secreted. It is found in the cell wall. The catalysed reaction is [(1-&gt;4)-alpha-D-galacturonosyl methyl ester](n) + n H2O = [(1-&gt;4)-alpha-D-galacturonosyl](n) + n methanol + n H(+). It functions in the pathway glycan metabolism; pectin degradation; 2-dehydro-3-deoxy-D-gluconate from pectin: step 1/5. Acts in the modification of cell walls via demethylesterification of cell wall pectin. This Arabidopsis thaliana (Mouse-ear cress) protein is Probable pectinesterase/pectinesterase inhibitor 59 (PME59).